The primary structure comprises 321 residues: Sialic acid-binding periplasmic protein SiaP (321 aa).

Residues 1-22 (MKTINKITIAILTLSAAASVNA) form the signal peptide.

Belongs to the bacterial solute-binding protein 7 family. The complex comprises the extracytoplasmic solute receptor protein SiaP, and the two transmembrane proteins SiaQ and SiaM.

It localises to the periplasm. In terms of biological role, part of the tripartite ATP-independent periplasmic (TRAP) transport system SiaPQM that catalyzes unidirectional Na(+)-dependent sialic acid uptake. Binds the common sialic acid N-acetylneuraminic acid (Neu5Ac) with a high affinity. This chain is Sialic acid-binding periplasmic protein SiaP, found in Vibrio cholerae serotype O1 (strain ATCC 39315 / El Tor Inaba N16961).